The sequence spans 340 residues: Putative Ig-like domain-containing protein C1 (340 aa).

In terms of domain architecture, Ig-like spans 207–294; sequence PTVTVTGIER…SSPRVMVPTI (88 aa).

The sequence is that of Putative Ig-like domain-containing protein C1 from Sus scrofa (Pig).